The chain runs to 386 residues: Arginine biosynthesis bifunctional protein ArgJ (386 aa).

Substrate contacts are provided by threonine 148, lysine 170, threonine 181, glutamate 261, asparagine 381, and serine 386. Threonine 181 functions as the Nucleophile in the catalytic mechanism.

The protein belongs to the ArgJ family. As to quaternary structure, heterotetramer of two alpha and two beta chains.

The protein resides in the cytoplasm. The enzyme catalyses N(2)-acetyl-L-ornithine + L-glutamate = N-acetyl-L-glutamate + L-ornithine. It carries out the reaction L-glutamate + acetyl-CoA = N-acetyl-L-glutamate + CoA + H(+). The protein operates within amino-acid biosynthesis; L-arginine biosynthesis; L-ornithine and N-acetyl-L-glutamate from L-glutamate and N(2)-acetyl-L-ornithine (cyclic): step 1/1. It participates in amino-acid biosynthesis; L-arginine biosynthesis; N(2)-acetyl-L-ornithine from L-glutamate: step 1/4. In terms of biological role, catalyzes two activities which are involved in the cyclic version of arginine biosynthesis: the synthesis of N-acetylglutamate from glutamate and acetyl-CoA as the acetyl donor, and of ornithine by transacetylation between N(2)-acetylornithine and glutamate. The chain is Arginine biosynthesis bifunctional protein ArgJ from Corynebacterium diphtheriae (strain ATCC 700971 / NCTC 13129 / Biotype gravis).